The primary structure comprises 334 residues: Protein-methionine-sulfoxide reductase catalytic subunit MsrP (334 aa).

The tat-type signal signal peptide spans 1–44; that stretch reads MKKNQFLKESDVTAESVFFMKRRQVLKALGISAAALSLPHAAHA. Mo-molybdopterin contacts are provided by residues asparagine 88, 91 to 92, cysteine 146, threonine 181, asparagine 233, arginine 238, and 249 to 251; these read YE and GIK.

Belongs to the MsrP family. Heterodimer of a catalytic subunit (MsrP) and a heme-binding subunit (MsrQ). Requires Mo-molybdopterin as cofactor. Post-translationally, predicted to be exported by the Tat system. The position of the signal peptide cleavage has not been experimentally proven.

Its subcellular location is the periplasm. The enzyme catalyses L-methionyl-[protein] + a quinone + H2O = L-methionyl-(S)-S-oxide-[protein] + a quinol. The catalysed reaction is L-methionyl-[protein] + a quinone + H2O = L-methionyl-(R)-S-oxide-[protein] + a quinol. Its function is as follows. Part of the MsrPQ system that repairs oxidized periplasmic proteins containing methionine sulfoxide residues (Met-O), using respiratory chain electrons. Thus protects these proteins from oxidative-stress damage caused by reactive species of oxygen and chlorine generated by the host defense mechanisms. MsrPQ is essential for the maintenance of envelope integrity under bleach stress, rescuing a wide series of structurally unrelated periplasmic proteins from methionine oxidation, including the primary periplasmic chaperone SurA and the lipoprotein Pal. The catalytic subunit MsrP is non-stereospecific, being able to reduce both (R-) and (S-) diastereoisomers of methionine sulfoxide. This is Protein-methionine-sulfoxide reductase catalytic subunit MsrP from Escherichia coli (strain UTI89 / UPEC).